The chain runs to 640 residues: Large subunit GTPase 1 homolog (640 aa).

The region spanning 165–426 (WRQLWRVIER…LCDCPGLVMP (262 aa)) is the CP-type G domain. 213–216 (NKAD) contacts GTP. A disordered region spans residues 251 to 341 (AEERGEDAMD…ESTATSSFYN (91 aa)). 3 stretches are compositionally biased toward acidic residues: residues 253–270 (ERGEDAMDQEDQSDTEEE), 290–304 (EKDENEQDEEEEGED), and 320–331 (ESGDEDHAEENP). Residues 332 to 341 (ESTATSSFYN) show a composition bias toward polar residues. GTP-binding positions include 375–382 (GYPNVGKS) and 419–422 (DCPG). The tract at residues 602–640 (GPVEAGKANTEQQAGKPWKKHGNRNKKEKVRRLNKHLDA) is disordered. Residues 618 to 640 (PWKKHGNRNKKEKVRRLNKHLDA) show a composition bias toward basic residues.

This sequence belongs to the TRAFAC class YlqF/YawG GTPase family. LSG1 subfamily.

Its subcellular location is the cytoplasm. The protein localises to the endoplasmic reticulum. It localises to the nucleus. The protein resides in the cajal body. It catalyses the reaction GTP + H2O = GDP + phosphate + H(+). Functions as a GTPase. May act by mediating the release of NMD3 from the 60S ribosomal subunit after export into the cytoplasm during the 60S ribosomal subunit maturation. The chain is Large subunit GTPase 1 homolog from Danio rerio (Zebrafish).